The sequence spans 89 residues: Small ribosomal subunit protein uS15 (89 aa).

This sequence belongs to the universal ribosomal protein uS15 family. In terms of assembly, part of the 30S ribosomal subunit. Forms a bridge to the 50S subunit in the 70S ribosome, contacting the 23S rRNA.

Functionally, one of the primary rRNA binding proteins, it binds directly to 16S rRNA where it helps nucleate assembly of the platform of the 30S subunit by binding and bridging several RNA helices of the 16S rRNA. In terms of biological role, forms an intersubunit bridge (bridge B4) with the 23S rRNA of the 50S subunit in the ribosome. The sequence is that of Small ribosomal subunit protein uS15 from Corynebacterium aurimucosum (strain ATCC 700975 / DSM 44827 / CIP 107346 / CN-1) (Corynebacterium nigricans).